The following is a 552-amino-acid chain: CTP synthase (552 aa).

The segment at 1 to 270 is amidoligase domain; it reads MTKYVFVTGG…DRIICEELKL (270 aa). A CTP-binding site is contributed by Ser-13. Ser-13 serves as a coordination point for UTP. Residues 14–19 and Asp-71 each bind ATP; that span reads SLGKGI. Mg(2+) contacts are provided by Asp-71 and Glu-144. Residues 151-153, 191-196, and Lys-227 contribute to the CTP site; these read DIE and KTKPTQ. UTP is bound by residues 191 to 196 and Lys-227; that span reads KTKPTQ. In terms of domain architecture, Glutamine amidotransferase type-1 spans 295 to 547; it reads TIGMVGKYVD…VEAALANKQA (253 aa). L-glutamine is bound at residue Gly-356. Catalysis depends on Cys-383, which acts as the Nucleophile; for glutamine hydrolysis. Residues 384 to 387, Glu-407, and Arg-473 each bind L-glutamine; that span reads LGMQ. Catalysis depends on residues His-520 and Glu-522.

The protein belongs to the CTP synthase family. In terms of assembly, homotetramer.

The enzyme catalyses UTP + L-glutamine + ATP + H2O = CTP + L-glutamate + ADP + phosphate + 2 H(+). It carries out the reaction L-glutamine + H2O = L-glutamate + NH4(+). It catalyses the reaction UTP + NH4(+) + ATP = CTP + ADP + phosphate + 2 H(+). The protein operates within pyrimidine metabolism; CTP biosynthesis via de novo pathway; CTP from UDP: step 2/2. Its activity is regulated as follows. Allosterically activated by GTP, when glutamine is the substrate; GTP has no effect on the reaction when ammonia is the substrate. The allosteric effector GTP functions by stabilizing the protein conformation that binds the tetrahedral intermediate(s) formed during glutamine hydrolysis. Inhibited by the product CTP, via allosteric rather than competitive inhibition. Catalyzes the ATP-dependent amination of UTP to CTP with either L-glutamine or ammonia as the source of nitrogen. Regulates intracellular CTP levels through interactions with the four ribonucleotide triphosphates. The sequence is that of CTP synthase from Burkholderia cenocepacia (strain HI2424).